Consider the following 266-residue polypeptide: UPF0354 protein LMHCC_0955 (266 aa).

This sequence belongs to the UPF0354 family.

The protein is UPF0354 protein LMHCC_0955 of Listeria monocytogenes serotype 4a (strain HCC23).